The chain runs to 112 residues: Cytochrome c (112 aa).

The heme c site is built by Cys23, Cys26, and His27. Lys81 carries the post-translational modification N6,N6,N6-trimethyllysine. A heme c-binding site is contributed by Met89. Lys95 carries the post-translational modification N6,N6,N6-trimethyllysine.

It belongs to the cytochrome c family. Binds 1 heme c group covalently per subunit.

Its subcellular location is the mitochondrion intermembrane space. In terms of biological role, electron carrier protein. The oxidized form of the cytochrome c heme group can accept an electron from the heme group of the cytochrome c1 subunit of cytochrome reductase. Cytochrome c then transfers this electron to the cytochrome oxidase complex, the final protein carrier in the mitochondrial electron-transport chain. The polypeptide is Cytochrome c (CC-1) (Arabidopsis thaliana (Mouse-ear cress)).